A 199-amino-acid polypeptide reads, in one-letter code: Elongation factor Ts (199 aa).

The interval 82–85 (TDFV) is involved in Mg(2+) ion dislocation from EF-Tu.

Belongs to the EF-Ts family.

It localises to the cytoplasm. In terms of biological role, associates with the EF-Tu.GDP complex and induces the exchange of GDP to GTP. It remains bound to the aminoacyl-tRNA.EF-Tu.GTP complex up to the GTP hydrolysis stage on the ribosome. This is Elongation factor Ts from Leptospira borgpetersenii serovar Hardjo-bovis (strain JB197).